We begin with the raw amino-acid sequence, 642 residues long: Threonine--tRNA ligase (642 aa).

Positions Met-1–Thr-61 constitute a TGS domain. Residues Asp-243–Pro-534 form a catalytic region. Residues Cys-334, His-385, and His-511 each coordinate Zn(2+).

This sequence belongs to the class-II aminoacyl-tRNA synthetase family. As to quaternary structure, homodimer. Zn(2+) is required as a cofactor.

The protein resides in the cytoplasm. It catalyses the reaction tRNA(Thr) + L-threonine + ATP = L-threonyl-tRNA(Thr) + AMP + diphosphate + H(+). Catalyzes the attachment of threonine to tRNA(Thr) in a two-step reaction: L-threonine is first activated by ATP to form Thr-AMP and then transferred to the acceptor end of tRNA(Thr). Also edits incorrectly charged L-seryl-tRNA(Thr). This chain is Threonine--tRNA ligase, found in Shewanella sp. (strain ANA-3).